A 300-amino-acid polypeptide reads, in one-letter code: 4-hydroxy-tetrahydrodipicolinate synthase (300 aa).

Thr-49 is a pyruvate binding site. Tyr-137 acts as the Proton donor/acceptor in catalysis. Residue Lys-166 is the Schiff-base intermediate with substrate of the active site. Residue Ile-208 coordinates pyruvate.

The protein belongs to the DapA family. As to quaternary structure, homotetramer; dimer of dimers.

It localises to the cytoplasm. It carries out the reaction L-aspartate 4-semialdehyde + pyruvate = (2S,4S)-4-hydroxy-2,3,4,5-tetrahydrodipicolinate + H2O + H(+). It participates in amino-acid biosynthesis; L-lysine biosynthesis via DAP pathway; (S)-tetrahydrodipicolinate from L-aspartate: step 3/4. Catalyzes the condensation of (S)-aspartate-beta-semialdehyde [(S)-ASA] and pyruvate to 4-hydroxy-tetrahydrodipicolinate (HTPA). The polypeptide is 4-hydroxy-tetrahydrodipicolinate synthase (Methanopyrus kandleri (strain AV19 / DSM 6324 / JCM 9639 / NBRC 100938)).